Consider the following 405-residue polypeptide: Pulcherriminic acid synthase (405 aa).

Heme is bound by residues K62, N229, R285, and C353.

Belongs to the cytochrome P450 family. As to quaternary structure, homodimer. The cofactor is heme.

It catalyses the reaction cyclo(L-leucyl-L-leucyl) + 6 reduced [2Fe-2S]-[ferredoxin] + 3 O2 + 4 H(+) = pulcherriminic acid + 6 oxidized [2Fe-2S]-[ferredoxin] + 4 H2O. Involved in the biosynthesis of pulcherrimin, a red extracellular pigment. Catalyzes the oxidation of cyclo(L-Leu-L-Leu) (cLL) to yield pulcherriminic acid which forms pulcherrimin via a nonenzymic reaction with Fe(3+). Substrates with small alkyl groups (cAA, cLG, cLP) exhibit weaker binding to CYP134A1, but substrates with larger hydrophobic side chains bind in a similar regime to cLL. This chain is Pulcherriminic acid synthase (cypX), found in Bacillus subtilis (strain 168).